Reading from the N-terminus, the 89-residue chain is Small ribosomal subunit protein uS15 (89 aa).

The protein belongs to the universal ribosomal protein uS15 family. In terms of assembly, part of the 30S ribosomal subunit. Forms a bridge to the 50S subunit in the 70S ribosome, contacting the 23S rRNA.

In terms of biological role, one of the primary rRNA binding proteins, it binds directly to 16S rRNA where it helps nucleate assembly of the platform of the 30S subunit by binding and bridging several RNA helices of the 16S rRNA. Forms an intersubunit bridge (bridge B4) with the 23S rRNA of the 50S subunit in the ribosome. The chain is Small ribosomal subunit protein uS15 from Chelativorans sp. (strain BNC1).